The primary structure comprises 149 residues: Putative pre-16S rRNA nuclease (149 aa).

This sequence belongs to the YqgF nuclease family.

The protein localises to the cytoplasm. Functionally, could be a nuclease involved in processing of the 5'-end of pre-16S rRNA. The protein is Putative pre-16S rRNA nuclease of Synechococcus sp. (strain ATCC 27144 / PCC 6301 / SAUG 1402/1) (Anacystis nidulans).